The sequence spans 82 residues: Small ribosomal subunit protein uS17 (82 aa).

Belongs to the universal ribosomal protein uS17 family. As to quaternary structure, part of the 30S ribosomal subunit.

Functionally, one of the primary rRNA binding proteins, it binds specifically to the 5'-end of 16S ribosomal RNA. The protein is Small ribosomal subunit protein uS17 of Shewanella sediminis (strain HAW-EB3).